The sequence spans 549 residues: Chaperonin GroEL 2 (549 aa).

ATP-binding positions include 29 to 32 (TLGP), K50, 86 to 90 (DGTTT), G414, 477 to 479 (NAA), and D493.

The protein belongs to the chaperonin (HSP60) family. Forms a cylinder of 14 subunits composed of two heptameric rings stacked back-to-back. Interacts with the co-chaperonin GroES.

It is found in the cytoplasm. It catalyses the reaction ATP + H2O + a folded polypeptide = ADP + phosphate + an unfolded polypeptide.. Functionally, together with its co-chaperonin GroES, plays an essential role in assisting protein folding. The GroEL-GroES system forms a nano-cage that allows encapsulation of the non-native substrate proteins and provides a physical environment optimized to promote and accelerate protein folding. This is Chaperonin GroEL 2 from Myxococcus xanthus (strain DK1622).